The following is an 82-amino-acid chain: Defensin-like protein 275 (82 aa).

The signal sequence occupies residues 1-23; that stretch reads MALSKFQLVALLITYTLLFSCQS. Intrachain disulfides connect C36–C78, C42–C65, C48–C76, and C52–C77.

This sequence belongs to the DEFL family.

The protein localises to the secreted. This Arabidopsis thaliana (Mouse-ear cress) protein is Defensin-like protein 275.